A 60-amino-acid chain; its full sequence is LKCKKLIPLFSKTCPEGKNLCYKMTMRLAPKVPVKRGCIDVCPKSSFLVKYECCDTDRCN.

4 disulfides stabilise this stretch: cysteine 3–cysteine 21, cysteine 14–cysteine 38, cysteine 42–cysteine 53, and cysteine 54–cysteine 59.

It belongs to the three-finger toxin family. Short-chain subfamily. Type IA cytotoxin sub-subfamily. In terms of assembly, monomer in solution; Homodimer and oligomer in the presence of negatively charged lipids forming a pore with a size ranging between 20 and 30 Angstroms. As to expression, expressed by the venom gland.

Its subcellular location is the secreted. It is found in the target cell membrane. Shows cytolytic activity on many different cells by forming pore in lipid membranes. In vivo, increases heart rate or kills the animal by cardiac arrest. In addition, it binds to heparin with high affinity, interacts with Kv channel-interacting protein 1 (KCNIP1) in a calcium-independent manner, and binds to integrin alpha-V/beta-3 (ITGAV/ITGB3) with moderate affinity. The polypeptide is Cytotoxin 5 (Naja mossambica (Mozambique spitting cobra)).